A 193-amino-acid polypeptide reads, in one-letter code: Adenine phosphoribosyltransferase (193 aa).

The protein belongs to the purine/pyrimidine phosphoribosyltransferase family. As to quaternary structure, homodimer.

The protein resides in the cytoplasm. It catalyses the reaction AMP + diphosphate = 5-phospho-alpha-D-ribose 1-diphosphate + adenine. It participates in purine metabolism; AMP biosynthesis via salvage pathway; AMP from adenine: step 1/1. In terms of biological role, catalyzes a salvage reaction resulting in the formation of AMP, that is energically less costly than de novo synthesis. In Bifidobacterium animalis subsp. lactis (strain AD011), this protein is Adenine phosphoribosyltransferase.